We begin with the raw amino-acid sequence, 205 residues long: Transcriptional regulator GfcR (205 aa).

This sequence belongs to the purine/pyrimidine phosphoribosyltransferase family. GfcR subfamily.

In Methanococcus maripaludis (strain DSM 14266 / JCM 13030 / NBRC 101832 / S2 / LL), this protein is Transcriptional regulator GfcR.